We begin with the raw amino-acid sequence, 419 residues long: MGMTMTQKILAAHAGLEAVKAGQLIEANLDLVLGNDITTPVAVNEFKKFGTDKVFSKSQIAIVPDHFTPNKDIKAAEQVKYIREFAQNMEIENFFEVGEMGIEHCLLPEKGLVVAGDVVIGADSHTCTYGALGAFSTGIGSTDMAAGMATGKCWFKVPSALKFVLKNKPAKWISGKDIILHIIGMIGVDGALYKSMEFVGDGLQYLSMDDRFTMANMAIEAGGKNGIFPVDDKTEEYLKDHASREWKVYEADEDAEYDKVFEIDLSELRPTVSFPHLPDNTRTIDNTGDVAIDQVVIGSCTNGRISDLRMARDILKGKKVKKGIRCIVIPGTQKIYLQAIKEGIVTDLVEAGAAFSTPTCGPCLGGHMGILAKGERCVSTTNRNFVGRMGHVESEVYLASPAVAAASALTGKITDPELV.

Residues Cys-300, Cys-360, and Cys-363 each contribute to the [4Fe-4S] cluster site.

Belongs to the aconitase/IPM isomerase family. LeuC type 2 subfamily. As to quaternary structure, heterodimer of LeuC and LeuD. It depends on [4Fe-4S] cluster as a cofactor.

It catalyses the reaction (2R,3S)-3-isopropylmalate = (2S)-2-isopropylmalate. It functions in the pathway amino-acid biosynthesis; L-leucine biosynthesis; L-leucine from 3-methyl-2-oxobutanoate: step 2/4. Its function is as follows. Catalyzes the isomerization between 2-isopropylmalate and 3-isopropylmalate, via the formation of 2-isopropylmaleate. This chain is 3-isopropylmalate dehydratase large subunit, found in Clostridium beijerinckii (strain ATCC 51743 / NCIMB 8052) (Clostridium acetobutylicum).